The sequence spans 324 residues: Cytochrome f (324 aa).

A signal peptide spans 1-30 (MNMRFSPKALVRQLGRLSLVACLSLGLLGA). The heme site is built by Y42, C62, C65, and H66. The chain crosses the membrane as a helical span at residues 290-310 (VLGVIAFFFAVMLAQIMLVLK).

It belongs to the cytochrome f family. The 4 large subunits of the cytochrome b6-f complex are cytochrome b6, subunit IV (17 kDa polypeptide, PetD), cytochrome f and the Rieske protein, while the 4 small subunits are PetG, PetL, PetM and PetN. The complex functions as a dimer. It depends on heme as a cofactor.

It is found in the cellular thylakoid membrane. Its function is as follows. Component of the cytochrome b6-f complex, which mediates electron transfer between photosystem II (PSII) and photosystem I (PSI), cyclic electron flow around PSI, and state transitions. The polypeptide is Cytochrome f (Synechococcus elongatus (strain ATCC 33912 / PCC 7942 / FACHB-805) (Anacystis nidulans R2)).